A 246-amino-acid polypeptide reads, in one-letter code: Putative outer membrane protein YiaT (246 aa).

The N-terminal stretch at 1 to 21 is a signal peptide; sequence MLINRNIVALFALPFMASATA.

This sequence belongs to the MipA/OmpV family.

It localises to the cell outer membrane. This is Putative outer membrane protein YiaT (yiaT) from Escherichia coli O157:H7.